The sequence spans 217 residues: THAP domain-containing protein 2 (217 aa).

The segment at 1 to 80 adopts a THAP-type zinc-finger fold; it reads MPTNCAAAGC…LKMDAVPTIF (80 aa). An HCFC1-binding motif (HBM) motif is present at residues 122–125; that stretch reads EHSY.

In Mus musculus (Mouse), this protein is THAP domain-containing protein 2 (Thap2).